A 230-amino-acid polypeptide reads, in one-letter code: Probable septum site-determining protein MinC (230 aa).

Belongs to the MinC family. In terms of assembly, interacts with MinD and FtsZ.

Functionally, cell division inhibitor that blocks the formation of polar Z ring septums. Rapidly oscillates between the poles of the cell to destabilize FtsZ filaments that have formed before they mature into polar Z rings. Prevents FtsZ polymerization. In Rhodopseudomonas palustris (strain BisA53), this protein is Probable septum site-determining protein MinC.